We begin with the raw amino-acid sequence, 446 residues long: UDP-N-acetylmuramoylalanine--D-glutamate ligase (446 aa).

112 to 118 (GTNGKST) provides a ligand contact to ATP.

This sequence belongs to the MurCDEF family.

It is found in the cytoplasm. It catalyses the reaction UDP-N-acetyl-alpha-D-muramoyl-L-alanine + D-glutamate + ATP = UDP-N-acetyl-alpha-D-muramoyl-L-alanyl-D-glutamate + ADP + phosphate + H(+). Its pathway is cell wall biogenesis; peptidoglycan biosynthesis. Functionally, cell wall formation. Catalyzes the addition of glutamate to the nucleotide precursor UDP-N-acetylmuramoyl-L-alanine (UMA). The polypeptide is UDP-N-acetylmuramoylalanine--D-glutamate ligase (Baumannia cicadellinicola subsp. Homalodisca coagulata).